Consider the following 333-residue polypeptide: Outer membrane protein assembly factor BamC (333 aa).

The signal sequence occupies residues 1–18 (MKKCLFPLSVLAVIVATG). A lipid anchor (N-palmitoyl cysteine) is attached at cysteine 19. Cysteine 19 carries the S-diacylglycerol cysteine lipid modification.

This sequence belongs to the BamC family. In terms of assembly, part of the Bam complex.

Its subcellular location is the cell outer membrane. Part of the outer membrane protein assembly complex, which is involved in assembly and insertion of beta-barrel proteins into the outer membrane. The protein is Outer membrane protein assembly factor BamC of Actinobacillus succinogenes (strain ATCC 55618 / DSM 22257 / CCUG 43843 / 130Z).